A 380-amino-acid polypeptide reads, in one-letter code: MAAQRDDEAGWSAEAARRVWGGAVPLQVHLHDADVTTLPPPPPFLTLGPRIGYLPLLVPIIKAHFSSTLPPGIDTVWFEYKGLPLKWYIPIGVLYDLLCADPERPWNLTVHFRGYPSEILTLCDGEDSVKWSYMNSLKEAAFIITGNSKNVMNMSQADQGALWQSVMKGNLDGYMNISTRLKLGPFEEDCLVRTSSVEGQQGSDEPESPGSGKPCRVPVRLYVRSVQEDLYDLEDALPVGDWESISYINRPFEVRREEGRSYITLEHALKTLLPEFFSSKASRIPDDSETAPQAPDSAPNDDSDVTPRSCEKLESSASSSPQEANVANKGKIVKLVRVQGIEVDMDIPFLWVANNLKNPECYLHICVYVGTRKREPKDGR.

A Glycyl lysine isopeptide (Lys-Gly) (interchain with G-Cter in ATG12) cross-link involves residue lysine 138. Over residues 194 to 203 the composition is skewed to polar residues; sequence TSSVEGQQGS. Disordered regions lie at residues 194 to 214 and 283 to 309; these read TSSV…SGKP and RIPD…TPRS.

Belongs to the ATG5 family. In terms of assembly, conjugated to ATG12. In terms of processing, conjugated to ATG12; which is essential for autophagy.

It localises to the cytoplasm. In terms of biological role, required for autophagy. Conjugation to ATG12 is essential for plant nutrient recycling. The sequence is that of Autophagy protein 5 (ATG5) from Oryza sativa subsp. japonica (Rice).